The chain runs to 269 residues: uncharacterized protein (269 aa).

The segment covering 1–16 (MTDVPSKPPQTTPPPK) has biased composition (pro residues). Disordered stretches follow at residues 1–110 (MTDV…TISG) and 157–269 (ILQQ…PTIQ). Residues 21–45 (APTTIFSSPPQLPDRSSLNISHTAS) show a composition bias toward polar residues. Positions 46–58 (TPTLTPTPLQQQQ) are enriched in low complexity. The segment covering 80-93 (SFSNSPNRQTQSFI) has biased composition (polar residues). The span at 159 to 181 (QQPQQSHSPQQQQQQHTPNHQQP) shows a compositional bias: low complexity. Residues 182-195 (LSPQQQKDLAQKRS) show a composition bias toward polar residues. A compositionally biased stretch (pro residues) spans 198-213 (PLPPRPNKNRPLPTPI).

This is an uncharacterized protein from Dictyostelium discoideum (Social amoeba).